The following is a 202-amino-acid chain: Small ribosomal subunit protein uS2 (202 aa).

The protein belongs to the universal ribosomal protein uS2 family.

This Pyrococcus horikoshii (strain ATCC 700860 / DSM 12428 / JCM 9974 / NBRC 100139 / OT-3) protein is Small ribosomal subunit protein uS2 (rps2).